A 616-amino-acid chain; its full sequence is Chaperone protein HscA (616 aa).

The protein belongs to the heat shock protein 70 family.

Its function is as follows. Chaperone involved in the maturation of iron-sulfur cluster-containing proteins. Has a low intrinsic ATPase activity which is markedly stimulated by HscB. Involved in the maturation of IscU. The chain is Chaperone protein HscA from Pectobacterium carotovorum subsp. carotovorum (strain PC1).